Here is a 330-residue protein sequence, read N- to C-terminus: Ketol-acid reductoisomerase (NADP(+)) (330 aa).

Residues 1–181 (MKVFYDSDFK…GLSRAGVIQT (181 aa)) enclose the KARI N-terminal Rossmann domain. NADP(+) contacts are provided by residues 24-27 (YGSQ), R47, S52, and 82-85 (DELQ). H107 is an active-site residue. G133 contributes to the NADP(+) binding site. Positions 182–327 (TFKEETETDL…AKLRKMCGLE (146 aa)) constitute a KARI C-terminal knotted domain. 4 residues coordinate Mg(2+): D190, E194, E226, and E230. Substrate is bound at residue S251.

It belongs to the ketol-acid reductoisomerase family. It depends on Mg(2+) as a cofactor.

The enzyme catalyses (2R)-2,3-dihydroxy-3-methylbutanoate + NADP(+) = (2S)-2-acetolactate + NADPH + H(+). It catalyses the reaction (2R,3R)-2,3-dihydroxy-3-methylpentanoate + NADP(+) = (S)-2-ethyl-2-hydroxy-3-oxobutanoate + NADPH + H(+). The protein operates within amino-acid biosynthesis; L-isoleucine biosynthesis; L-isoleucine from 2-oxobutanoate: step 2/4. It participates in amino-acid biosynthesis; L-valine biosynthesis; L-valine from pyruvate: step 2/4. In terms of biological role, involved in the biosynthesis of branched-chain amino acids (BCAA). Catalyzes an alkyl-migration followed by a ketol-acid reduction of (S)-2-acetolactate (S2AL) to yield (R)-2,3-dihydroxy-isovalerate. In the isomerase reaction, S2AL is rearranged via a Mg-dependent methyl migration to produce 3-hydroxy-3-methyl-2-ketobutyrate (HMKB). In the reductase reaction, this 2-ketoacid undergoes a metal-dependent reduction by NADPH to yield (R)-2,3-dihydroxy-isovalerate. In Methanococcus maripaludis (strain C6 / ATCC BAA-1332), this protein is Ketol-acid reductoisomerase (NADP(+)).